Here is a 386-residue protein sequence, read N- to C-terminus: DNA-directed RNA polymerase subunit Rpo1C (386 aa).

The protein belongs to the RNA polymerase beta' chain family. As to quaternary structure, part of the RNA polymerase complex.

It localises to the cytoplasm. The catalysed reaction is RNA(n) + a ribonucleoside 5'-triphosphate = RNA(n+1) + diphosphate. Functionally, DNA-dependent RNA polymerase (RNAP) catalyzes the transcription of DNA into RNA using the four ribonucleoside triphosphates as substrates. Forms part of the jaw domain. The sequence is that of DNA-directed RNA polymerase subunit Rpo1C from Methanococcus maripaludis (strain C7 / ATCC BAA-1331).